A 518-amino-acid chain; its full sequence is Probable thiamine biosynthetic bifunctional enzyme (518 aa).

Residues 1–229 (MKRQIDYSLY…ATPPCFAQAR (229 aa)) form a thiamine-phosphate synthase region. Residues 40-44 (QHREK) and N72 contribute to the 4-amino-2-methyl-5-(diphosphooxymethyl)pyrimidine site. The Mg(2+) site is built by D73 and D92. 4-amino-2-methyl-5-(diphosphooxymethyl)pyrimidine is bound at residue S111. 137–139 (TNT) contacts 2-[(2R,5Z)-2-carboxy-4-methylthiazol-5(2H)-ylidene]ethyl phosphate. Residue K140 coordinates 4-amino-2-methyl-5-(diphosphooxymethyl)pyrimidine. Residues G173 and 199 to 200 (VS) each bind 2-[(2R,5Z)-2-carboxy-4-methylthiazol-5(2H)-ylidene]ethyl phosphate. The interval 230-518 (SSLTTPKDLL…IERAKLEKAE (289 aa)) is hydroxyethylthiazole kinase. M281 is a binding site for 5-(2-hydroxyethyl)-4-methylthiazole. ATP is bound by residues K355 and S403. A 5-(2-hydroxyethyl)-4-methylthiazole-binding site is contributed by A430. Residue C433 is the Proton acceptor; for hydroxyethylthiazole kinase activity of the active site.

In the N-terminal section; belongs to the thiamine-phosphate synthase family. This sequence in the C-terminal section; belongs to the Thz kinase family. Mg(2+) serves as cofactor.

The catalysed reaction is 2-[(2R,5Z)-2-carboxy-4-methylthiazol-5(2H)-ylidene]ethyl phosphate + 4-amino-2-methyl-5-(diphosphooxymethyl)pyrimidine + 2 H(+) = thiamine phosphate + CO2 + diphosphate. It carries out the reaction 2-(2-carboxy-4-methylthiazol-5-yl)ethyl phosphate + 4-amino-2-methyl-5-(diphosphooxymethyl)pyrimidine + 2 H(+) = thiamine phosphate + CO2 + diphosphate. It catalyses the reaction 4-methyl-5-(2-phosphooxyethyl)-thiazole + 4-amino-2-methyl-5-(diphosphooxymethyl)pyrimidine + H(+) = thiamine phosphate + diphosphate. The enzyme catalyses 5-(2-hydroxyethyl)-4-methylthiazole + ATP = 4-methyl-5-(2-phosphooxyethyl)-thiazole + ADP + H(+). The protein operates within cofactor biosynthesis; thiamine diphosphate biosynthesis; 4-methyl-5-(2-phosphoethyl)-thiazole from 5-(2-hydroxyethyl)-4-methylthiazole: step 1/1. It functions in the pathway cofactor biosynthesis; thiamine diphosphate biosynthesis; thiamine phosphate from 4-amino-2-methyl-5-diphosphomethylpyrimidine and 4-methyl-5-(2-phosphoethyl)-thiazole: step 1/1. In terms of biological role, condenses 4-methyl-5-(beta-hydroxyethyl)thiazole monophosphate (THZ-P) and 2-methyl-4-amino-5-hydroxymethyl pyrimidine pyrophosphate (HMP-PP) to form thiamine monophosphate (TMP). The chain is Probable thiamine biosynthetic bifunctional enzyme (thi4) from Schizosaccharomyces pombe (strain 972 / ATCC 24843) (Fission yeast).